The following is a 92-amino-acid chain: Small ribosomal subunit protein uS19c (92 aa).

Belongs to the universal ribosomal protein uS19 family.

The protein localises to the plastid. The protein resides in the chloroplast. Functionally, protein S19 forms a complex with S13 that binds strongly to the 16S ribosomal RNA. The sequence is that of Small ribosomal subunit protein uS19c from Cyanidium caldarium (Red alga).